A 224-amino-acid chain; its full sequence is Protein GrpE (224 aa).

Polar residues-rich tracts occupy residues 1–16 (MSGDASTSAQDQNVES) and 209–224 (ESSSDAASEQPQEGDA). Disordered regions lie at residues 1-35 (MSGDASTSAQDQNVESNDVPAIPDVDAGTPIDPVV) and 203-224 (SMGPGPESSSDAASEQPQEGDA).

Belongs to the GrpE family. As to quaternary structure, homodimer.

Its subcellular location is the cytoplasm. Participates actively in the response to hyperosmotic and heat shock by preventing the aggregation of stress-denatured proteins, in association with DnaK and GrpE. It is the nucleotide exchange factor for DnaK and may function as a thermosensor. Unfolded proteins bind initially to DnaJ; upon interaction with the DnaJ-bound protein, DnaK hydrolyzes its bound ATP, resulting in the formation of a stable complex. GrpE releases ADP from DnaK; ATP binding to DnaK triggers the release of the substrate protein, thus completing the reaction cycle. Several rounds of ATP-dependent interactions between DnaJ, DnaK and GrpE are required for fully efficient folding. The polypeptide is Protein GrpE (Synechococcus sp. (strain CC9902)).